Here is a 294-residue protein sequence, read N- to C-terminus: Elongation factor Ts (294 aa).

An involved in Mg(2+) ion dislocation from EF-Tu region spans residues 81–84 (TDFV).

Belongs to the EF-Ts family.

It localises to the cytoplasm. Functionally, associates with the EF-Tu.GDP complex and induces the exchange of GDP to GTP. It remains bound to the aminoacyl-tRNA.EF-Tu.GTP complex up to the GTP hydrolysis stage on the ribosome. In Hydrogenovibrio crunogenus (strain DSM 25203 / XCL-2) (Thiomicrospira crunogena), this protein is Elongation factor Ts.